A 447-amino-acid chain; its full sequence is Chromosomal replication initiator protein DnaA (447 aa).

The domain I, interacts with DnaA modulators stretch occupies residues 1-79 (MVSCENLWQQ…TGQEITVKLI (79 aa)). Residues 79-105 (ITDGLEPHSLIGQESSLPMETTPKNAT) form a domain II region. The interval 106-322 (ALNGKYTFSR…GALIRAIAYT (217 aa)) is domain III, AAA+ region. Positions 150, 152, 153, and 154 each coordinate ATP. The segment at 323-447 (SLSNVAMTVE…INIAGQAPES (125 aa)) is domain IV, binds dsDNA.

It belongs to the DnaA family. In terms of assembly, oligomerizes as a right-handed, spiral filament on DNA at oriC.

It localises to the cytoplasm. In terms of biological role, plays an essential role in the initiation and regulation of chromosomal replication. ATP-DnaA binds to the origin of replication (oriC) to initiate formation of the DNA replication initiation complex once per cell cycle. Binds the DnaA box (a 9 base pair repeat at the origin) and separates the double-stranded (ds)DNA. Forms a right-handed helical filament on oriC DNA; dsDNA binds to the exterior of the filament while single-stranded (ss)DNA is stabiized in the filament's interior. The ATP-DnaA-oriC complex binds and stabilizes one strand of the AT-rich DNA unwinding element (DUE), permitting loading of DNA polymerase. After initiation quickly degrades to an ADP-DnaA complex that is not apt for DNA replication. Binds acidic phospholipids. Isolated domain IV (residues 348-447) binds both E.coli and B.subtilis oriC. The polypeptide is Chromosomal replication initiator protein DnaA (Synechocystis sp. (strain ATCC 27184 / PCC 6803 / Kazusa)).